The chain runs to 107 residues: Protein phosphatase 1 regulatory subunit INH3 (107 aa).

Positions 1–14 (MSTATRPSSSATTS) are enriched in low complexity. 2 disordered regions span residues 1 to 40 (MSTA…KKKK) and 69 to 107 (PFDE…KAVD). Residues 71 to 80 (DEDDSEEEDD) are compositionally biased toward acidic residues. A compositionally biased stretch (basic and acidic residues) spans 81-94 (NNHHCDHNHEHSES). Residues 95 to 107 (GEASSSNDSKAVD) are compositionally biased toward low complexity.

Interacts with protein phosphatase 1. Expressed in roots, cotyledons, leaves, flowers and embryos.

Functionally, inhibitor of protein-phosphatase 1 (PP1). Binds to and inhibits PP1 activity. Required for early embryogenesis progression. This is Protein phosphatase 1 regulatory subunit INH3 from Arabidopsis thaliana (Mouse-ear cress).